The following is a 293-amino-acid chain: Short-chain dehydrogenase/reductase PhomF' (293 aa).

NADP(+)-binding residues include Ile31 and Asn102. Ser175 acts as the Proton donor in catalysis. Residues Tyr190, Lys194, and Ser225 each contribute to the NADP(+) site. The active-site Proton acceptor is the Tyr190. Lys194 functions as the Lowers pKa of active site Tyr in the catalytic mechanism.

This sequence belongs to the short-chain dehydrogenases/reductases (SDR) family.

Its function is as follows. Short-chain dehydrogenase/reductase; part of the gene cluster that mediates the biosynthesis of the phomopsins, a group of hexapeptide mycotoxins which infects lupins and causes lupinosis disease in livestock. The role of phomF' within the phomopsins biosynthesis pathway has still to be determined. The pathway starts with the processing of the precursor phomA by several endopeptidases including kexin proteases as well as the cluster-specific S41 family peptidase phomP1 and the oligopeptidase phomG to produce 10 identical copies of the hexapeptide Tyr-Val-Ile-Pro-Ile-Asp. After being excised from the precursor peptide, the core peptides are cyclized and modified post-translationally by enzymes encoded within the gene cluster. The timing and order of proteolysis of the phomA precursor and PTMs are still unknown. Two tyrosinase-like enzymes, phomQ1 and phomQ2, catalyze the chlorination and hydroxylation of Tyr, respectively. PhomYb, is proposed to be involved in the construction of the macrocyclic structure. The other 4 ustYa family proteins may be involved in PTMs that generate the unique structure of phomopsin A. PhomYa is required for the hydroxylation of C-beta of Tyr. PhomYc, phomYd, and phomYe are responsible for the biosynthesis of 2,3-dehydroisoleucine (dIle), 2,3-dehydroaspartic acid (dAsp), and 3,4-dehydroproline (dPro), respectively. While dIle formation by phomYc is indispensable for the installation of dAsp by phomYd, the order of the other PTMs have not been elucidated yet. Most of the biosynthetic enzymes likely have broad substrate specificity, and thus, there might be a metabolic grid from a precursor to phomopsin A. The enzyme(s) responsible for the biosynthesis of 3,4-dehydrovaline (dVal) have also not been identified yet. Finally, phomM acts as an S-adenosylmethionine-dependent alpha-N-methyltransferase that catalyzes two successive N-methylation reactions, converting N-desmethyl-phomopsin A to phomopsin A and phomopsin A further to an N,N-dimethylated congener called phomopsin E. This Diaporthe leptostromiformis (Lupinosis disease fungus) protein is Short-chain dehydrogenase/reductase PhomF'.